The chain runs to 296 residues: tRNA uridine(34) hydroxylase (296 aa).

In terms of domain architecture, Rhodanese spans 132–226 (AGRPVVMLDT…YFEEVGGAHY (95 aa)). The active-site Cysteine persulfide intermediate is the Cys-186.

It belongs to the TrhO family.

The catalysed reaction is uridine(34) in tRNA + AH2 + O2 = 5-hydroxyuridine(34) in tRNA + A + H2O. Functionally, catalyzes oxygen-dependent 5-hydroxyuridine (ho5U) modification at position 34 in tRNAs. The protein is tRNA uridine(34) hydroxylase of Burkholderia thailandensis (strain ATCC 700388 / DSM 13276 / CCUG 48851 / CIP 106301 / E264).